The chain runs to 79 residues: Acyl carrier protein (79 aa).

The Carrier domain maps to 2–77 (SEIGERVKKI…DATKFLEKNA (76 aa)). Serine 37 bears the O-(pantetheine 4'-phosphoryl)serine mark.

The protein belongs to the acyl carrier protein (ACP) family. 4'-phosphopantetheine is transferred from CoA to a specific serine of apo-ACP by AcpS. This modification is essential for activity because fatty acids are bound in thioester linkage to the sulfhydryl of the prosthetic group.

Its subcellular location is the cytoplasm. It functions in the pathway lipid metabolism; fatty acid biosynthesis. Its function is as follows. Carrier of the growing fatty acid chain in fatty acid biosynthesis. The protein is Acyl carrier protein of Rhodopseudomonas palustris (strain HaA2).